The chain runs to 272 residues: Type II secretion system protein C (272 aa).

Topologically, residues 1-16 (MNISKLPPLSPSVIRR) are cytoplasmic. Residues 17-35 (ILFYLLMLLFCQQLAMIFW) form a helical membrane-spanning segment. The Periplasmic portion of the chain corresponds to 36 to 272 (RIGLPDNAPV…DIYMEFGGDE (237 aa)).

It belongs to the GSP C family.

It is found in the cell inner membrane. Involved in a type II secretion system (T2SS, formerly general secretion pathway, GSP) for the export of proteins. Required for the translocation of the multiple pectic enzymes. In Dickeya dadantii (strain 3937) (Erwinia chrysanthemi (strain 3937)), this protein is Type II secretion system protein C (outC).